Here is a 120-residue protein sequence, read N- to C-terminus: uncharacterized protein (120 aa).

Residues 45–78 are a coiled coil; sequence QLISESLKIAQKDLMEVRKELRKRKIAIRETERD.

This is an uncharacterized protein from Bacillus subtilis (strain 168).